The chain runs to 154 residues: 6,7-dimethyl-8-ribityllumazine synthase (154 aa).

Residues F22, 56–58 (AFE), and 80–82 (AVI) contribute to the 5-amino-6-(D-ribitylamino)uracil site. Residue 85–86 (AT) participates in (2S)-2-hydroxy-3-oxobutyl phosphate binding. The active-site Proton donor is H88. A 5-amino-6-(D-ribitylamino)uracil-binding site is contributed by F113. R127 contacts (2S)-2-hydroxy-3-oxobutyl phosphate.

Belongs to the DMRL synthase family. As to quaternary structure, forms an icosahedral capsid composed of 60 subunits, arranged as a dodecamer of pentamers.

It carries out the reaction (2S)-2-hydroxy-3-oxobutyl phosphate + 5-amino-6-(D-ribitylamino)uracil = 6,7-dimethyl-8-(1-D-ribityl)lumazine + phosphate + 2 H2O + H(+). It functions in the pathway cofactor biosynthesis; riboflavin biosynthesis; riboflavin from 2-hydroxy-3-oxobutyl phosphate and 5-amino-6-(D-ribitylamino)uracil: step 1/2. Functionally, catalyzes the formation of 6,7-dimethyl-8-ribityllumazine by condensation of 5-amino-6-(D-ribitylamino)uracil with 3,4-dihydroxy-2-butanone 4-phosphate. This is the penultimate step in the biosynthesis of riboflavin. This chain is 6,7-dimethyl-8-ribityllumazine synthase, found in Geobacillus sp. (strain WCH70).